A 136-amino-acid polypeptide reads, in one-letter code: Protein Tat (136 aa).

The interval 22 to 37 (CTNCYCKKCCFHCPVC) is cysteine-rich. Residues 38–48 (FTKKALGISYG) are core. A compositionally biased stretch (basic residues) spans 48–57 (GRKRRGRKSA). Positions 48-136 (GRKRRGRKSA…SGSSGSACKH (89 aa)) are disordered. Residues 49–55 (RKRRGRK) carry the Nuclear localization signal, and RNA-binding (TAR) motif. The segment covering 58-73 (VHSTNNQDPVRQQSLP) has biased composition (polar residues). The segment covering 104-120 (SSVSSGRTSGTSSSGYT) has biased composition (low complexity). Polar residues predominate over residues 123-136 (FKTSSGSSGSACKH).

Belongs to the lentiviruses Tat family. Interacts with host CCNT1. Associates with the P-TEFb complex composed at least of Tat, P-TEFb (CDK9 and CCNT1), TAR RNA, RNA Pol II. Interacts with CCNT2; the resulting complex is unable to bind to TAR RNA.

It is found in the host nucleus. The protein localises to the host nucleolus. Its function is as follows. Transcriptional activator that increases RNA Pol II processivity, thereby increasing the level of full-length viral transcripts. Recognizes a hairpin structure at the 5'-LTR of the nascent viral mRNAs referred to as the transactivation responsive RNA element (TAR) and recruits the cyclin T1-CDK9 complex (P-TEFb complex) that will in turn hyperphosphorylate the RNA polymerase II to allow efficient elongation. The CDK9 component of P-TEFb and other Tat-activated kinases hyperphosphorylate the C-terminus of RNA Pol II that becomes stabilized and much more processive. In terms of biological role, extracellular circulating Tat can be endocytosed by surrounding uninfected cells via the binding to several surface receptors. Endosomal low pH allows Tat to cross the endosome membrane to enter the cytosol and eventually further translocate into the nucleus, thereby inducing severe cell dysfunctions ranging from cell activation to cell death. Through. This Simian immunodeficiency virus (isolate TAN1) (SIV-cpz) protein is Protein Tat.